The following is a 193-amino-acid chain: Pyridoxal 5'-phosphate synthase subunit PdxT (193 aa).

50-52 (GES) is an L-glutamine binding site. The Nucleophile role is filled by cysteine 82. L-glutamine contacts are provided by residues arginine 109 and 136–137 (IR). Residues histidine 172 and glutamate 174 each act as charge relay system in the active site.

This sequence belongs to the glutaminase PdxT/SNO family. In terms of assembly, in the presence of PdxS, forms a dodecamer of heterodimers. Only shows activity in the heterodimer.

The enzyme catalyses aldehydo-D-ribose 5-phosphate + D-glyceraldehyde 3-phosphate + L-glutamine = pyridoxal 5'-phosphate + L-glutamate + phosphate + 3 H2O + H(+). It catalyses the reaction L-glutamine + H2O = L-glutamate + NH4(+). The protein operates within cofactor biosynthesis; pyridoxal 5'-phosphate biosynthesis. Its function is as follows. Catalyzes the hydrolysis of glutamine to glutamate and ammonia as part of the biosynthesis of pyridoxal 5'-phosphate. The resulting ammonia molecule is channeled to the active site of PdxS. The protein is Pyridoxal 5'-phosphate synthase subunit PdxT of Streptococcus pneumoniae serotype 19F (strain G54).